Here is a 296-residue protein sequence, read N- to C-terminus: Nucleotide-binding protein SGO_0954 (296 aa).

13 to 20 (GMSGAGKT) lines the ATP pocket. Residue 63-66 (DMRS) coordinates GTP.

The protein belongs to the RapZ-like family.

Displays ATPase and GTPase activities. This chain is Nucleotide-binding protein SGO_0954, found in Streptococcus gordonii (strain Challis / ATCC 35105 / BCRC 15272 / CH1 / DL1 / V288).